The chain runs to 666 residues: Galactocerebrosidase (666 aa).

A signal peptide spans 1 to 22; that stretch reads MIYKLYFAIALCFSLCFDLCIA. T91 lines the substrate pocket. N-linked (GlcNAc...) asparagine glycosylation is present at N125. Residues W133 and N179 each contribute to the substrate site. The active-site Proton donor/acceptor is the E180. Residue E256 is the Nucleophile of the active site. Residues C269 and C376 are joined by a disulfide bond. N361 carries N-linked (GlcNAc...) asparagine glycosylation. R378 serves as a coordination point for substrate. N-linked (GlcNAc...) asparagine glycosylation is found at N385, N390, N500, and N540.

This sequence belongs to the glycosyl hydrolase 59 family.

The protein resides in the lysosome. The catalysed reaction is a beta-D-galactosyl-(1&lt;-&gt;1')-N-acylsphing-4-enine + H2O = an N-acylsphing-4-enine + D-galactose. The enzyme catalyses beta-D-galactosyl-(1&lt;-&gt;1)-sphing-4-enine + H2O = sphing-4-enine + D-galactose. It carries out the reaction a D-galactosylceramide + H2O = an N-acyl-sphingoid base + D-galactose. Hydrolyzes the galactose ester bonds of glycolipids such as galactosylceramide and galactosylsphingosine. This Salmo salar (Atlantic salmon) protein is Galactocerebrosidase.